The following is a 186-amino-acid chain: Threonylcarbamoyl-AMP synthase (186 aa).

The 181-residue stretch at 6–186 folds into the YrdC-like domain; it reads GFRLRLAANA…FDAMSGRRIR (181 aa).

Belongs to the SUA5 family. TsaC subfamily.

It is found in the cytoplasm. It catalyses the reaction L-threonine + hydrogencarbonate + ATP = L-threonylcarbamoyladenylate + diphosphate + H2O. Required for the formation of a threonylcarbamoyl group on adenosine at position 37 (t(6)A37) in tRNAs that read codons beginning with adenine. Catalyzes the conversion of L-threonine, HCO(3)(-)/CO(2) and ATP to give threonylcarbamoyl-AMP (TC-AMP) as the acyladenylate intermediate, with the release of diphosphate. This chain is Threonylcarbamoyl-AMP synthase, found in Methylococcus capsulatus (strain ATCC 33009 / NCIMB 11132 / Bath).